The chain runs to 101 residues: Synaptobrevin-B (101 aa).

The Cytoplasmic segment spans residues 1–76 (MSNNPNNSGQ…RRQMWCRNMK (76 aa)). Positions 13 to 73 (KTQSILQEVD…VTIRRQMWCR (61 aa)) constitute a v-SNARE coiled-coil homology domain. A helical; Anchor for type IV membrane protein transmembrane segment spans residues 77–97 (LQLIIIAVVILVLAVILIPII). The Vesicular portion of the chain corresponds to 98 to 101 (MKFV).

This sequence belongs to the synaptobrevin family.

Its subcellular location is the cytoplasmic vesicle. It is found in the secretory vesicle membrane. Its function is as follows. Involved in the targeting and/or fusion of transport vesicles to their target membrane. In Dictyostelium discoideum (Social amoeba), this protein is Synaptobrevin-B (sybB).